The chain runs to 136 residues: Class I hydrophobin 16 (136 aa).

The signal sequence occupies residues 1 to 19 (MKFTSVIALVATAATLVGA). Cystine bridges form between cysteine 58/cysteine 115, cysteine 65/cysteine 109, cysteine 66/cysteine 99, and cysteine 116/cysteine 129. Asparagine 74 carries an N-linked (GlcNAc...) asparagine glycan.

Belongs to the fungal hydrophobin family. Self-assembles to form functional amyloid fibrils called rodlets. Self-assembly into fibrillar rodlets occurs spontaneously at hydrophobic:hydrophilic interfaces and the rodlets further associate laterally to form amphipathic monolayers.

It localises to the secreted. The protein localises to the cell wall. Functionally, aerial growth, conidiation, and dispersal of filamentous fungi in the environment rely upon a capability of their secreting small amphipathic proteins called hydrophobins (HPBs) with low sequence identity. Class I can self-assemble into an outermost layer of rodlet bundles on aerial cell surfaces, conferring cellular hydrophobicity that supports fungal growth, development and dispersal; whereas Class II form highly ordered films at water-air interfaces through intermolecular interactions but contribute nothing to the rodlet structure. Hydph16 is a class I hydrophobin that has specific functions in aerial mycelium formation, cell wall stress protection, and cell wall structure formation, but does not seem to be involved in mycelial hydrophobicity. Specifically functions in resisting cell wall synthesis inhibitors. The protein is Class I hydrophobin 16 of Pleurotus ostreatus (strain PC15) (Oyster mushroom).